The primary structure comprises 963 residues: uncharacterized protein (963 aa).

2 coiled-coil regions span residues 176–236 (NGRN…HIRM) and 373–467 (DYEW…KKTV). The helical transmembrane segment at 468 to 488 (IAAGMLFIVLFSLLQQWIPAI) threads the bilayer. Coiled coils occupy residues 536-570 (RNKQ…AEMA) and 647-789 (ALHT…LEAS).

Its subcellular location is the cell membrane. This is an uncharacterized protein from Bacillus subtilis (strain 168).